The following is a 226-amino-acid chain: PKHD-type hydroxylase Nwi_0701 (226 aa).

In terms of domain architecture, Fe2OG dioxygenase spans 78-178 (KVLPPRFNRY…RLAAFFWTQS (101 aa)). Fe cation is bound by residues histidine 96, aspartate 98, and histidine 159. 2-oxoglutarate is bound at residue arginine 169.

Fe(2+) serves as cofactor. L-ascorbate is required as a cofactor.

This chain is PKHD-type hydroxylase Nwi_0701, found in Nitrobacter winogradskyi (strain ATCC 25391 / DSM 10237 / CIP 104748 / NCIMB 11846 / Nb-255).